Consider the following 88-residue polypeptide: Small ribosomal subunit protein bS20 (88 aa).

Residues 1–12 (MANHKSALKRAK) show a composition bias toward basic residues. A disordered region spans residues 1–23 (MANHKSALKRAKQNTIKQMRNRS).

Belongs to the bacterial ribosomal protein bS20 family.

Functionally, binds directly to 16S ribosomal RNA. The polypeptide is Small ribosomal subunit protein bS20 (Desulfatibacillum aliphaticivorans).